The primary structure comprises 652 residues: Acetyl-coenzyme A synthetase (652 aa).

CoA is bound by residues 191-194 (RAGR), threonine 311, and asparagine 335. Residues 387-389 (GEP), 411-416 (DTWWQT), aspartate 500, and arginine 515 contribute to the ATP site. A CoA-binding site is contributed by serine 523. Arginine 526 is a binding site for ATP. Positions 537, 539, and 542 each coordinate Mg(2+). CoA is bound at residue arginine 584. An N6-acetyllysine modification is found at lysine 609.

It belongs to the ATP-dependent AMP-binding enzyme family. Requires Mg(2+) as cofactor. Acetylated. Deacetylation by the SIR2-homolog deacetylase activates the enzyme.

It carries out the reaction acetate + ATP + CoA = acetyl-CoA + AMP + diphosphate. In terms of biological role, catalyzes the conversion of acetate into acetyl-CoA (AcCoA), an essential intermediate at the junction of anabolic and catabolic pathways. Acs undergoes a two-step reaction. In the first half reaction, Acs combines acetate with ATP to form acetyl-adenylate (AcAMP) intermediate. In the second half reaction, it can then transfer the acetyl group from AcAMP to the sulfhydryl group of CoA, forming the product AcCoA. Enables the cell to use acetate during aerobic growth to generate energy via the TCA cycle, and biosynthetic compounds via the glyoxylate shunt. Acetylates CheY, the response regulator involved in flagellar movement and chemotaxis. The chain is Acetyl-coenzyme A synthetase from Salmonella typhi.